We begin with the raw amino-acid sequence, 207 residues long: Large ribosomal subunit protein bL25 (207 aa).

The protein belongs to the bacterial ribosomal protein bL25 family. CTC subfamily. Part of the 50S ribosomal subunit; part of the 5S rRNA/L5/L18/L25 subcomplex. Contacts the 5S rRNA. Binds to the 5S rRNA independently of L5 and L18.

Functionally, this is one of the proteins that binds to the 5S RNA in the ribosome where it forms part of the central protuberance. The chain is Large ribosomal subunit protein bL25 from Azorhizobium caulinodans (strain ATCC 43989 / DSM 5975 / JCM 20966 / LMG 6465 / NBRC 14845 / NCIMB 13405 / ORS 571).